The chain runs to 549 residues: Glucose-6-phosphate isomerase (549 aa).

The active-site Proton donor is Glu-355. Residues His-386 and Lys-514 contribute to the active site.

It belongs to the GPI family.

The protein resides in the cytoplasm. The enzyme catalyses alpha-D-glucose 6-phosphate = beta-D-fructose 6-phosphate. Its pathway is carbohydrate biosynthesis; gluconeogenesis. The protein operates within carbohydrate degradation; glycolysis; D-glyceraldehyde 3-phosphate and glycerone phosphate from D-glucose: step 2/4. Its function is as follows. Catalyzes the reversible isomerization of glucose-6-phosphate to fructose-6-phosphate. The protein is Glucose-6-phosphate isomerase of Salmonella arizonae (strain ATCC BAA-731 / CDC346-86 / RSK2980).